A 406-amino-acid polypeptide reads, in one-letter code: Peptidase T (406 aa).

Residue His82 coordinates Zn(2+). Asp84 is a catalytic residue. Residue Asp142 participates in Zn(2+) binding. The active-site Proton acceptor is Glu176. Residues Glu177, Asp199, and His381 each contribute to the Zn(2+) site.

This sequence belongs to the peptidase M20B family. Zn(2+) serves as cofactor.

It localises to the cytoplasm. It carries out the reaction Release of the N-terminal residue from a tripeptide.. Its function is as follows. Cleaves the N-terminal amino acid of tripeptides. The protein is Peptidase T of Streptococcus agalactiae serotype V (strain ATCC BAA-611 / 2603 V/R).